Reading from the N-terminus, the 422-residue chain is uncharacterized protein (422 aa).

The 79-residue stretch at 5 to 83 (CVVYVGNIPY…RRLRVDFPTA (79 aa)) folds into the RRM domain. The tract at residues 337–358 (RSSSIPSSGSIRSPSLTTTSAQ) is disordered.

It is found in the nucleus. This is an uncharacterized protein from Schizosaccharomyces pombe (strain 972 / ATCC 24843) (Fission yeast).